A 446-amino-acid polypeptide reads, in one-letter code: tRNA modification GTPase MnmE (446 aa).

The (6S)-5-formyl-5,6,7,8-tetrahydrofolate site is built by Arg24, Glu81, and Lys120. One can recognise a TrmE-type G domain in the interval 216 to 368 (GLHAVLIGPP…LHTRLRELAL (153 aa)). Asn226 contacts K(+). GTP-binding positions include 226 to 231 (NAGKSS), 245 to 251 (TDVAGTT), and 270 to 273 (DTAG). Ser230 serves as a coordination point for Mg(2+). K(+)-binding residues include Thr245, Val247, and Thr250. Position 251 (Thr251) interacts with Mg(2+). Lys446 is a (6S)-5-formyl-5,6,7,8-tetrahydrofolate binding site.

Belongs to the TRAFAC class TrmE-Era-EngA-EngB-Septin-like GTPase superfamily. TrmE GTPase family. In terms of assembly, homodimer. Heterotetramer of two MnmE and two MnmG subunits. The cofactor is K(+).

Its subcellular location is the cytoplasm. Exhibits a very high intrinsic GTPase hydrolysis rate. Involved in the addition of a carboxymethylaminomethyl (cmnm) group at the wobble position (U34) of certain tRNAs, forming tRNA-cmnm(5)s(2)U34. The protein is tRNA modification GTPase MnmE of Xanthomonas campestris pv. campestris (strain B100).